Reading from the N-terminus, the 93-residue chain is Cell division protein FtsB (93 aa).

The Cytoplasmic segment spans residues 1–3; it reads MRL. Residues 4–21 traverse the membrane as a helical segment; it reads FILSLFALLVMFQYDFWF. The Periplasmic portion of the chain corresponds to 22–93; sequence GKNGYLDYQD…FYRIVKNKNR (72 aa). Positions 28–76 form a coiled coil; that stretch reads DYQDIKAEIIQRKQENKKLSQRNQTIFAEIQDLKNGIEAIEERARMEHE.

Belongs to the FtsB family. Part of a complex composed of FtsB, FtsL and FtsQ.

Its subcellular location is the cell inner membrane. Its function is as follows. Essential cell division protein. May link together the upstream cell division proteins, which are predominantly cytoplasmic, with the downstream cell division proteins, which are predominantly periplasmic. The polypeptide is Cell division protein FtsB (Histophilus somni (strain 129Pt) (Haemophilus somnus)).